The sequence spans 134 residues: Methylglyoxal synthase (134 aa).

An MGS-like domain is found at 1–134; the sequence is MHIALIAHDE…DWRDLRRNDE (134 aa). Residues H8, K12, 34-37, and 54-55 each bind substrate; these read TGTT and SG. D60 (proton donor/acceptor) is an active-site residue. H87 serves as a coordination point for substrate.

The protein belongs to the methylglyoxal synthase family.

It carries out the reaction dihydroxyacetone phosphate = methylglyoxal + phosphate. In terms of biological role, catalyzes the formation of methylglyoxal from dihydroxyacetone phosphate. The chain is Methylglyoxal synthase from Listeria innocua serovar 6a (strain ATCC BAA-680 / CLIP 11262).